Here is a 50-residue protein sequence, read N- to C-terminus: Small integral membrane protein 46 (50 aa).

A helical transmembrane segment spans residues 15–37 (TTFQLWLQLLLWAHLAVRFLGYL).

It is found in the membrane. The protein is Small integral membrane protein 46 of Homo sapiens (Human).